Reading from the N-terminus, the 363-residue chain is MATLRRLQEAPRHLLVCEKSNFGHDKSRHKHLVETHYHNYRVSFLIPECGLLSKKLKDLVMEMGPYYSVKKLPLHELITHEFINTFVKKGSLSALTYNTSIDEDNTVALLPNGKLILSLDKDTYEETGLQGHPSRYSGRKSMRFIISIDLMDLSLNLDSKKYRRISWSFKEKKPLKFDFLLAWHHTGTEESTMMSYFSKYQIREHQPKVALSTVRDLQCPVLQSSSLAGEPEEACNALEFFDWLGAVFCNADLNNEPHNFISTYCCPQPNTVAAQACLCTITGFVLPEKILVLLEQLCHYFDEPKLAPWVTLTVQGFADSPVAWREKEHGFHKGGEHLYNFVVFNNQDYWLQMAVGANDDCPP.

As to quaternary structure, component of nuclear RNase P and RNase MRP ribonucleoproteins. RNase P consists of a catalytic RNA moiety and about 10 protein subunits; POP1, POP4, POP5, POP7, RPP14, RPP21, RPP25, RPP30, RPP38 and RPP40. Within the RNase P complex, POP1, POP7 and RPP25 form the 'finger' subcomplex, POP5, RPP14, RPP40 and homodimeric RPP30 form the 'palm' subcomplex, and RPP21, POP4 and RPP38 form the 'wrist' subcomplex. All subunits of the RNase P complex interact with the catalytic RNA. Several subunits of RNase P are also part of the RNase MRP complex. RNase MRP consists of a catalytic RNA moiety and about 8 protein subunits; POP1, POP7, RPP25, RPP30, RPP38, RPP40 and possibly also POP4 and POP5.

It localises to the nucleus. Its subcellular location is the nucleolus. Functionally, component of ribonuclease P, a ribonucleoprotein complex that generates mature tRNA molecules by cleaving their 5'-ends. Also a component of the MRP ribonuclease complex, which cleaves pre-rRNA sequences. The polypeptide is Ribonuclease P protein subunit p40 (Rpp40) (Rattus norvegicus (Rat)).